Reading from the N-terminus, the 184-residue chain is MHKIVFVTGNKGKFAEVRDILKNFGIEAIQNKDGYPELQEDELEPIAANGAQYVANKLNMPVMVDDSGIFINALNGFPGPYSRFVEDKLGNPKVLKLMEGEKDRSAYFKTVIGYCEPGQEPLVFPGVVEGKIAYEERGTGGFGYDPIFEYNGMTFGELGDEEKNKVSHRRRAVDNFLEWFIGGA.

Residue 8–13 participates in substrate binding; that stretch reads TGNKGK. Glu-37 and Asp-66 together coordinate Mg(2+). Asp-66 acts as the Proton acceptor in catalysis. Substrate contacts are provided by residues Ser-67, 142 to 145, Lys-163, and 168 to 169; these read FGYD and HR.

It belongs to the HAM1 NTPase family. Homodimer. It depends on Mg(2+) as a cofactor.

It carries out the reaction XTP + H2O = XMP + diphosphate + H(+). It catalyses the reaction dITP + H2O = dIMP + diphosphate + H(+). The enzyme catalyses ITP + H2O = IMP + diphosphate + H(+). Pyrophosphatase that catalyzes the hydrolysis of nucleoside triphosphates to their monophosphate derivatives, with a high preference for the non-canonical purine nucleotides XTP (xanthosine triphosphate), dITP (deoxyinosine triphosphate) and ITP. Seems to function as a house-cleaning enzyme that removes non-canonical purine nucleotides from the nucleotide pool, thus preventing their incorporation into DNA/RNA and avoiding chromosomal lesions. The sequence is that of dITP/XTP pyrophosphatase from Methanosarcina mazei (strain ATCC BAA-159 / DSM 3647 / Goe1 / Go1 / JCM 11833 / OCM 88) (Methanosarcina frisia).